The primary structure comprises 99 residues: Large ribosomal subunit protein bL21 (99 aa).

Belongs to the bacterial ribosomal protein bL21 family. In terms of assembly, part of the 50S ribosomal subunit. Contacts protein L20.

Functionally, this protein binds to 23S rRNA in the presence of protein L20. The sequence is that of Large ribosomal subunit protein bL21 from Mesomycoplasma hyopneumoniae (strain 7448) (Mycoplasma hyopneumoniae).